We begin with the raw amino-acid sequence, 385 residues long: MALDGENRDGGSASVRVLKHCLEDVDSISSLPDVILQENLSLIPTKFAIRTSVLSKRWRHVWSETPSLDFDDCYKLDVDFIDKTLALYRARKIMTFDLWITNGINLPYIDGWIKFAMSRNVENLFLSFDFRLYDVPDYLYINSSVKQLVLGTESSELNPRCSVSWSSLTKLSLFSDESIAKILSGCPIIESLTLHFCDQLMVLDLTKSPSLKILEIHGSIWGSGPKHIVAPHIHSLTLKTSQFFIYFCDISSLTEAKVDICFCSLKEIKANFLLDTVLKCLYKLQNVDKLTFGANFLKILSLAEGRGLPFPMFKAKALTLETTISKYVIPGILRVLQNSPELKKLTLHTMDREARTMSFHFEFVESEILTICFYINEILFCSSTG.

Positions V25–C73 constitute an F-box domain.

This Arabidopsis thaliana (Mouse-ear cress) protein is Putative F-box protein At1g49610.